The following is a 158-amino-acid chain: Cyclic pyranopterin monophosphate synthase (158 aa).

Substrate contacts are provided by residues 76 to 78 (LCH) and 114 to 115 (ME). Asp-129 is a catalytic residue.

This sequence belongs to the MoaC family. Homohexamer; trimer of dimers.

It catalyses the reaction (8S)-3',8-cyclo-7,8-dihydroguanosine 5'-triphosphate = cyclic pyranopterin phosphate + diphosphate. The protein operates within cofactor biosynthesis; molybdopterin biosynthesis. Catalyzes the conversion of (8S)-3',8-cyclo-7,8-dihydroguanosine 5'-triphosphate to cyclic pyranopterin monophosphate (cPMP). In Brucella anthropi (strain ATCC 49188 / DSM 6882 / CCUG 24695 / JCM 21032 / LMG 3331 / NBRC 15819 / NCTC 12168 / Alc 37) (Ochrobactrum anthropi), this protein is Cyclic pyranopterin monophosphate synthase.